The following is a 190-amino-acid chain: Xanthine phosphoribosyltransferase 1 (190 aa).

Positions 20 and 27 each coordinate xanthine. Position 129 to 133 (Ala129 to Ala133) interacts with 5-phospho-alpha-D-ribose 1-diphosphate. Lys157 lines the xanthine pocket.

Belongs to the purine/pyrimidine phosphoribosyltransferase family. Xpt subfamily. Homodimer.

The protein localises to the cytoplasm. The enzyme catalyses XMP + diphosphate = xanthine + 5-phospho-alpha-D-ribose 1-diphosphate. It participates in purine metabolism; XMP biosynthesis via salvage pathway; XMP from xanthine: step 1/1. Converts the preformed base xanthine, a product of nucleic acid breakdown, to xanthosine 5'-monophosphate (XMP), so it can be reused for RNA or DNA synthesis. The sequence is that of Xanthine phosphoribosyltransferase 1 from Clostridium perfringens (strain ATCC 13124 / DSM 756 / JCM 1290 / NCIMB 6125 / NCTC 8237 / Type A).